The chain runs to 751 residues: Collagen alpha-1(XIII) chain (751 aa).

Positions 1 to 24 are disordered; that stretch reads MVAERTRKAAASGSRGPGELGAPG. Residues 1–40 are Cytoplasmic-facing; that stretch reads MVAERTRKAAASGSRGPGELGAPGPGTVALAEQCARLPSP. The tract at residues 1–119 is nonhelical region 1 (NC1); that stretch reads MVAERTRKAA…KMSPGCNCPP (119 aa). The span at 15-24 shows a compositional bias: gly residues; the sequence is RGPGELGAPG. The helical; Signal-anchor for type II membrane protein transmembrane segment at 41 to 59 threads the bilayer; sequence GCCGLLALALCSLALSLLA. Topologically, residues 60–751 are extracellular; that stretch reads HFRTAELQAR…GLPVQGCWNK (692 aa). Disordered stretches follow at residues 108–127, 190–225, and 265–449; these read APKMSPGCNCPPGPPGPTGR, PGHPGPKGEMGLVGPRGQPGPQGQKGEKGQCGEYPH, and TFQG…EMVD. The segment covering 116 to 125 has biased composition (pro residues); it reads NCPPGPPGPT. Residues 120–223 are triple-helical region 1 (COL1); sequence GPPGPTGRPG…KGEKGQCGEY (104 aa). Over residues 204–213 the composition is skewed to low complexity; the sequence is PRGQPGPQGQ. Residues 214–225 are compositionally biased toward basic and acidic residues; that stretch reads KGEKGQCGEYPH. Positions 224–273 are nonhelical region 2 (NC2); it reads PHREYPGGMLAALRSNPIMSLKLLPLLNSVRLAPPPVIKRRTFQGEQSQT. Residues 274–445 form a triple-helical region 2 (COL2) region; that stretch reads GIQGPPGPPG…KGAKGEPGKG (172 aa). Composition is skewed to pro residues over residues 278-288, 296-312, and 391-402; these read PPGPPGPPGPS, LPGPIGPPGLPGPPGPK, and PGPPGLPGPPGP. Positions 403-436 are enriched in low complexity; sequence KGEAGVDGQAGPPGQQGDKGQPGAAGEQGPSGPK. Residues 438–447 are compositionally biased toward basic and acidic residues; sequence AKGEPGKGEM. The nonhelical region 3 (NC3) stretch occupies residues 446–467; that stretch reads EMVDYNGSINEALQEIRTLALM. The N-linked (GlcNAc...) asparagine glycan is linked to Asn451. Residues 466–751 form a disordered region; the sequence is LMGPPGLPGQ…GLPVQGCWNK (286 aa). The tract at residues 468–733 is triple-helical region 3 (COL3); the sequence is GPPGLPGQTG…KGDQGAPGLD (266 aa). Pro residues predominate over residues 470–484; it reads PGLPGQTGPPGPPGT. 3 stretches are compositionally biased toward basic and acidic residues: residues 499–509, 557–568, and 586–596; these read HDGDKGPRGKP, TGEKGEPGDEGR, and EKGEAGEKGDP. The span at 601–613 shows a compositional bias: pro residues; that stretch reads PGPPGPEGPPGPP. Over residues 615–628 the composition is skewed to low complexity; sequence LQGFPGPKGEAGLE. Positions 630-643 are enriched in basic and acidic residues; sequence SKGEKGSQGEKGDR. A compositionally biased stretch (pro residues) spans 658–673; the sequence is PGPPGTPGPIGVPGPA. Over residues 684 to 699 the composition is skewed to low complexity; it reads DPGMTGPTGAAGLPGL. Positions 706–726 are enriched in basic and acidic residues; sequence KGNRGERGKKGSRGPKGDKGD. A nonhelical region 4 (NC4) region spans residues 734-751; that stretch reads APCPLGEDGLPVQGCWNK.

Homotrimer; disulfide-linked. Nucleation of the type XIII collagen triple helix is likely to occur at the N-terminal region with triple helix formation proceeding from the N- to the C-terminus. Interacts with FN1, perlecan/HSPG2 and NID2.

The protein localises to the cell membrane. Its subcellular location is the postsynaptic cell membrane. Functionally, involved in cell-matrix and cell-cell adhesion interactions that are required for normal development. May participate in the linkage between muscle fiber and basement membrane. May play a role in endochondral ossification of bone and branching morphogenesis of lung. Binds heparin. At neuromuscular junctions, may play a role in acetylcholine receptor clustering. This chain is Collagen alpha-1(XIII) chain, found in Mus musculus (Mouse).